We begin with the raw amino-acid sequence, 345 residues long: S-adenosylmethionine:tRNA ribosyltransferase-isomerase (345 aa).

It belongs to the QueA family. Monomer.

Its subcellular location is the cytoplasm. The catalysed reaction is 7-aminomethyl-7-carbaguanosine(34) in tRNA + S-adenosyl-L-methionine = epoxyqueuosine(34) in tRNA + adenine + L-methionine + 2 H(+). The protein operates within tRNA modification; tRNA-queuosine biosynthesis. Transfers and isomerizes the ribose moiety from AdoMet to the 7-aminomethyl group of 7-deazaguanine (preQ1-tRNA) to give epoxyqueuosine (oQ-tRNA). The protein is S-adenosylmethionine:tRNA ribosyltransferase-isomerase of Shewanella sp. (strain MR-4).